Reading from the N-terminus, the 246-residue chain is Endonuclease V (246 aa).

Asp50 and Asp120 together coordinate Mg(2+).

It belongs to the endonuclease V family. The cofactor is Mg(2+).

The protein resides in the cytoplasm. The enzyme catalyses Endonucleolytic cleavage at apurinic or apyrimidinic sites to products with a 5'-phosphate.. In terms of biological role, DNA repair enzyme involved in the repair of deaminated bases. Selectively cleaves double-stranded DNA at the second phosphodiester bond 3' to a deoxyinosine leaving behind the intact lesion on the nicked DNA. The chain is Endonuclease V from Gloeobacter violaceus (strain ATCC 29082 / PCC 7421).